The following is an 87-amino-acid chain: Small ribosomal subunit protein uS15c (87 aa).

The protein belongs to the universal ribosomal protein uS15 family. Part of the 30S ribosomal subunit.

The protein localises to the plastid. The protein resides in the chloroplast. The sequence is that of Small ribosomal subunit protein uS15c (rps15) from Atropa belladonna (Belladonna).